A 142-amino-acid chain; its full sequence is 3-hydroxyacyl-[acyl-carrier-protein] dehydratase FabZ (142 aa).

Residue H49 is part of the active site.

This sequence belongs to the thioester dehydratase family. FabZ subfamily.

The protein localises to the cytoplasm. It catalyses the reaction a (3R)-hydroxyacyl-[ACP] = a (2E)-enoyl-[ACP] + H2O. Functionally, involved in unsaturated fatty acids biosynthesis. Catalyzes the dehydration of short chain beta-hydroxyacyl-ACPs and long chain saturated and unsaturated beta-hydroxyacyl-ACPs. This Clostridium novyi (strain NT) protein is 3-hydroxyacyl-[acyl-carrier-protein] dehydratase FabZ.